Consider the following 344-residue polypeptide: MSYALLRPFLFNMDPEHAHEMTLSLLDKAHKARVLGLVYGQSMQPTDCMGLQFSNPVGLAAGLDKNGDYIDALAELGFGFIEVGTVTPKPQAGNDRPRLFRLKQADAIINRMGFNNEGVDYLIENVQRCKYKGNIGINIGKNAATPVEKAADDYVYCLERVYPHASYITVNISSPNTANLRDLQSGEALTHLLDAIKNRHSQLATEYGFYVPLVLKVAPDLDPIQVDYISQQLLDFEIDGLIATNTTLSRVGVEDLPDGDQAGGLSGRPVSHISTQILQQFSDQLDGKVALIGVGGIDSGAKAVKKIEAGADMVQLYSGLIYKGPGLVQSCIQSIGGYYDAMEN.

Residues A61–K65 and T85 each bind FMN. Substrate is bound at residue K65. N110–F114 contributes to the substrate binding site. 2 residues coordinate FMN: N138 and N171. N171 is a binding site for substrate. Residue S174 is the Nucleophile of the active site. Residue N176 participates in substrate binding. 2 residues coordinate FMN: K216 and T244. N245–T246 is a binding site for substrate. Residues G267, G296, and Y317–S318 each bind FMN.

This sequence belongs to the dihydroorotate dehydrogenase family. Type 2 subfamily. In terms of assembly, monomer. It depends on FMN as a cofactor.

Its subcellular location is the cell membrane. The catalysed reaction is (S)-dihydroorotate + a quinone = orotate + a quinol. It functions in the pathway pyrimidine metabolism; UMP biosynthesis via de novo pathway; orotate from (S)-dihydroorotate (quinone route): step 1/1. Functionally, catalyzes the conversion of dihydroorotate to orotate with quinone as electron acceptor. The protein is Dihydroorotate dehydrogenase (quinone) of Psychrobacter cryohalolentis (strain ATCC BAA-1226 / DSM 17306 / VKM B-2378 / K5).